The following is a 144-amino-acid chain: SsrA-binding protein (144 aa).

This sequence belongs to the SmpB family.

Its subcellular location is the cytoplasm. Functionally, required for rescue of stalled ribosomes mediated by trans-translation. Binds to transfer-messenger RNA (tmRNA), required for stable association of tmRNA with ribosomes. tmRNA and SmpB together mimic tRNA shape, replacing the anticodon stem-loop with SmpB. tmRNA is encoded by the ssrA gene; the 2 termini fold to resemble tRNA(Ala) and it encodes a 'tag peptide', a short internal open reading frame. During trans-translation Ala-aminoacylated tmRNA acts like a tRNA, entering the A-site of stalled ribosomes, displacing the stalled mRNA. The ribosome then switches to translate the ORF on the tmRNA; the nascent peptide is terminated with the 'tag peptide' encoded by the tmRNA and targeted for degradation. The ribosome is freed to recommence translation, which seems to be the essential function of trans-translation. The polypeptide is SsrA-binding protein (Thermus thermophilus (strain ATCC BAA-163 / DSM 7039 / HB27)).